The chain runs to 118 residues: Large ribosomal subunit protein uL18 (118 aa).

Belongs to the universal ribosomal protein uL18 family. Part of the 50S ribosomal subunit; part of the 5S rRNA/L5/L18/L25 subcomplex. Contacts the 5S and 23S rRNAs.

In terms of biological role, this is one of the proteins that bind and probably mediate the attachment of the 5S RNA into the large ribosomal subunit, where it forms part of the central protuberance. The sequence is that of Large ribosomal subunit protein uL18 from Campylobacter jejuni subsp. jejuni serotype O:2 (strain ATCC 700819 / NCTC 11168).